The chain runs to 430 residues: Neuropeptide FF receptor 1 (430 aa).

A disordered region spans residues 1-20; the sequence is MEGEPSQPPNSSWPLSQNGT. Residues 1 to 43 are Extracellular-facing; the sequence is MEGEPSQPPNSSWPLSQNGTNTEATPATNLTFSSYYQHTSPVA. Over residues 9–20 the composition is skewed to polar residues; that stretch reads PNSSWPLSQNGT. N-linked (GlcNAc...) asparagine glycosylation is found at asparagine 10, asparagine 18, and asparagine 29. Residues 44-64 traverse the membrane as a helical segment; sequence AMFIVAYALIFLLCMVGNTLV. The Cytoplasmic segment spans residues 65-80; it reads CFIVLKNRHMHTVTNM. Residues 81–101 traverse the membrane as a helical segment; it reads FILNLAVSDLLVGIFCMPTTL. The Extracellular segment spans residues 102-117; it reads VDNLITGWPFDNATCK. N-linked (GlcNAc...) asparagine glycosylation occurs at asparagine 113. Cysteines 116 and 203 form a disulfide. The helical transmembrane segment at 118–138 threads the bilayer; sequence MSGLVQGMSVSASVFTLVAIA. Residues 139 to 158 lie on the Cytoplasmic side of the membrane; it reads VERFRCIVHPFREKLTLRKA. A helical transmembrane segment spans residues 159 to 179; it reads LVTIAVIWALALLIMCPSAVT. At 180-214 the chain is on the extracellular side; it reads LTVTREEHHFMVDARNRSYPLYSCWEAWPEKGMRR. Asparagine 195 carries N-linked (GlcNAc...) asparagine glycosylation. The chain crosses the membrane as a helical span at residues 215–235; it reads VYTTVLFSHIYLAPLALIVVM. At 236-271 the chain is on the cytoplasmic side; the sequence is YARIARKLCQAPGPAPGGEEAADPRASRRRARVVHM. The chain crosses the membrane as a helical span at residues 272–292; it reads LVMVALFFTLSWLPLWALLLL. At 293–307 the chain is on the extracellular side; the sequence is IDYGQLSAPQLHLVT. Residues 308-328 traverse the membrane as a helical segment; that stretch reads VYAFPFAHWLAFFNSSANPII. At 329–430 the chain is on the cytoplasmic side; the sequence is YGYFNENFRR…LPLTIPAWDI (102 aa). The span at 379-404 shows a compositional bias: low complexity; it reads SDSGLPSESGPSSGAPRPGRLPLRNG. A disordered region spans residues 379–413; it reads SDSGLPSESGPSSGAPRPGRLPLRNGRVAHHGLPR.

This sequence belongs to the G-protein coupled receptor 1 family.

It localises to the cell membrane. Functionally, receptor for NPAF (A-18-F-amide) and NPFF (F-8-F-amide) neuropeptides, also known as morphine-modulating peptides. Can also be activated by a variety of naturally occurring or synthetic FMRF-amide like ligands. This receptor mediates its action by association with G proteins that activate a phosphatidylinositol-calcium second messenger system. This chain is Neuropeptide FF receptor 1, found in Homo sapiens (Human).